The sequence spans 376 residues: Queuine tRNA-ribosyltransferase (376 aa).

D89 serves as the catalytic Proton acceptor. Substrate is bound by residues 89–93 (DSGGF), D143, Q194, and G221. An RNA binding region spans residues 252–258 (GVGLPSN). D271 serves as the catalytic Nucleophile. Positions 276 to 280 (ARNGR) are RNA binding; important for wobble base 34 recognition. Residues C309, C311, C314, and H340 each coordinate Zn(2+).

It belongs to the queuine tRNA-ribosyltransferase family. In terms of assembly, homodimer. Within each dimer, one monomer is responsible for RNA recognition and catalysis, while the other monomer binds to the replacement base PreQ1. Zn(2+) is required as a cofactor.

The catalysed reaction is 7-aminomethyl-7-carbaguanine + guanosine(34) in tRNA = 7-aminomethyl-7-carbaguanosine(34) in tRNA + guanine. Its pathway is tRNA modification; tRNA-queuosine biosynthesis. In terms of biological role, catalyzes the base-exchange of a guanine (G) residue with the queuine precursor 7-aminomethyl-7-deazaguanine (PreQ1) at position 34 (anticodon wobble position) in tRNAs with GU(N) anticodons (tRNA-Asp, -Asn, -His and -Tyr). Catalysis occurs through a double-displacement mechanism. The nucleophile active site attacks the C1' of nucleotide 34 to detach the guanine base from the RNA, forming a covalent enzyme-RNA intermediate. The proton acceptor active site deprotonates the incoming PreQ1, allowing a nucleophilic attack on the C1' of the ribose to form the product. After dissociation, two additional enzymatic reactions on the tRNA convert PreQ1 to queuine (Q), resulting in the hypermodified nucleoside queuosine (7-(((4,5-cis-dihydroxy-2-cyclopenten-1-yl)amino)methyl)-7-deazaguanosine). The chain is Queuine tRNA-ribosyltransferase from Clostridium tetani (strain Massachusetts / E88).